Here is a 200-residue protein sequence, read N- to C-terminus: Recombination protein RecR (200 aa).

A C4-type zinc finger spans residues 57 to 72 (CEHCRTFTEEDICSIC). Residues 81–176 (RLLCVVEMPA…KVSRIAHGIP (96 aa)) enclose the Toprim domain.

It belongs to the RecR family.

Its function is as follows. May play a role in DNA repair. It seems to be involved in an RecBC-independent recombinational process of DNA repair. It may act with RecF and RecO. This is Recombination protein RecR from Mannheimia succiniciproducens (strain KCTC 0769BP / MBEL55E).